The following is a 736-amino-acid chain: Na(+)/H(+) antiporter NhaA (736 aa).

Residues 1-387 (MNHSPQSARP…ICGYLLLRAA (387 aa)) are na(+)/H(+) antiporter NhaA. The next 12 membrane-spanning stretches (helical) occupy residues 23–43 (AGGI…NSPF), 58–78 (LSLA…LVGL), 96–116 (MLPG…FAVL), 126–146 (GWAV…SLLG), 155–175 (VFLA…IAIF), 178–198 (AEIS…LFVM), 201–221 (MGVV…FFVF), 224–244 (GVHA…KPAP), 265–285 (VAFI…FKGL), 298–318 (ILLG…WLAI), 334–354 (LYGV…IGLL), and 367–387 (IGVL…LRAA). Residues 388–736 (RPDQSAANPL…EKAIWARYGL (349 aa)) are peptidase S49.

The protein in the N-terminal section; belongs to the NhaA Na(+)/H(+) (TC 2.A.33) antiporter family. It in the C-terminal section; belongs to the peptidase S49 family.

It is found in the cell inner membrane. It catalyses the reaction Na(+)(in) + 2 H(+)(out) = Na(+)(out) + 2 H(+)(in). In terms of biological role, na(+)/H(+) antiporter that extrudes sodium in exchange for external protons. In Brucella abortus (strain 2308), this protein is Na(+)/H(+) antiporter NhaA.